The following is a 473-amino-acid chain: Photosystem II CP43 reaction center protein (473 aa).

Positions 1 to 14 are excised as a propeptide; sequence MKILYSLRRFYHVE. N-acetylthreonine is present on Thr-15. Thr-15 is subject to Phosphothreonine. Transmembrane regions (helical) follow at residues 69–93, 134–155, 178–200, 255–275, and 291–312; these read LFEVAHFVPEKPMYEQGLILLPHLA, LLGPETLEESFPFFGYVWKDRN, KALYFGGVYDTWAPGGGDVRKIT, KPFAWARRAFVWSGEAYLSYS, and WFNNTAYPSEFYGPTGPEASQA. Glu-367 provides a ligand contact to [CaMn4O5] cluster. The chain crosses the membrane as a helical span at residues 447–471; the sequence is RARAAAAGFEKGIDRDLEPVLYMNP.

Belongs to the PsbB/PsbC family. PsbC subfamily. As to quaternary structure, PSII is composed of 1 copy each of membrane proteins PsbA, PsbB, PsbC, PsbD, PsbE, PsbF, PsbH, PsbI, PsbJ, PsbK, PsbL, PsbM, PsbT, PsbX, PsbY, PsbZ, Psb30/Ycf12, at least 3 peripheral proteins of the oxygen-evolving complex and a large number of cofactors. It forms dimeric complexes. The cofactor is Binds multiple chlorophylls and provides some of the ligands for the Ca-4Mn-5O cluster of the oxygen-evolving complex. It may also provide a ligand for a Cl- that is required for oxygen evolution. PSII binds additional chlorophylls, carotenoids and specific lipids..

It is found in the plastid. The protein resides in the chloroplast thylakoid membrane. One of the components of the core complex of photosystem II (PSII). It binds chlorophyll and helps catalyze the primary light-induced photochemical processes of PSII. PSII is a light-driven water:plastoquinone oxidoreductase, using light energy to abstract electrons from H(2)O, generating O(2) and a proton gradient subsequently used for ATP formation. This chain is Photosystem II CP43 reaction center protein, found in Brachypodium distachyon (Purple false brome).